Reading from the N-terminus, the 323-residue chain is GTP 3',8-cyclase (323 aa).

The 230-residue stretch at 4–233 (KYGREIDYLR…NGPAKYISIE (230 aa)) folds into the Radical SAM core domain. Arg13 provides a ligand contact to GTP. Residues Cys20 and Cys24 each contribute to the [4Fe-4S] cluster site. Tyr26 serves as a coordination point for S-adenosyl-L-methionine. Residue Cys27 participates in [4Fe-4S] cluster binding. Arg63 contributes to the GTP binding site. An S-adenosyl-L-methionine-binding site is contributed by Gly67. Residue Thr94 participates in GTP binding. Ser118 contributes to the S-adenosyl-L-methionine binding site. Lys154 contacts GTP. Met188 is an S-adenosyl-L-methionine binding site. Residues Cys250 and Cys253 each contribute to the [4Fe-4S] cluster site. 255 to 257 (RIR) contributes to the GTP binding site. Cys267 lines the [4Fe-4S] cluster pocket.

Belongs to the radical SAM superfamily. MoaA family. Monomer and homodimer. The cofactor is [4Fe-4S] cluster.

The enzyme catalyses GTP + AH2 + S-adenosyl-L-methionine = (8S)-3',8-cyclo-7,8-dihydroguanosine 5'-triphosphate + 5'-deoxyadenosine + L-methionine + A + H(+). The protein operates within cofactor biosynthesis; molybdopterin biosynthesis. In terms of biological role, catalyzes the cyclization of GTP to (8S)-3',8-cyclo-7,8-dihydroguanosine 5'-triphosphate. This chain is GTP 3',8-cyclase, found in Clostridium perfringens (strain 13 / Type A).